A 505-amino-acid chain; its full sequence is RNA-splicing ligase RtcB homolog (505 aa).

Mn(2+) is bound by residues Asp119, Cys122, His227, His259, and His353. 226-230 contributes to the GMP binding site; sequence NHYAE. GMP contacts are provided by residues 353–354, 402–405, Ser409, 428–431, and Lys504; these read HN, GGTM, and HGAG. The active-site GMP-histidine intermediate is the His428.

This sequence belongs to the RtcB family. As to quaternary structure, catalytic component of the tRNA-splicing ligase complex. Requires Mn(2+) as cofactor.

Its subcellular location is the nucleus. It localises to the cytoplasm. It carries out the reaction a 3'-end 3'-phospho-ribonucleotide-RNA + a 5'-end dephospho-ribonucleoside-RNA + GTP = a ribonucleotidyl-ribonucleotide-RNA + GMP + diphosphate. The catalysed reaction is a 3'-end 2',3'-cyclophospho-ribonucleotide-RNA + a 5'-end dephospho-ribonucleoside-RNA + GTP + H2O = a ribonucleotidyl-ribonucleotide-RNA + GMP + diphosphate + H(+). In terms of biological role, catalytic subunit of the tRNA-splicing ligase complex that acts by directly joining spliced tRNA halves to mature-sized tRNAs by incorporating the precursor-derived splice junction phosphate into the mature tRNA as a canonical 3',5'-phosphodiester. May act as an RNA ligase with broad substrate specificity, and may function toward other RNAs. The chain is RNA-splicing ligase RtcB homolog from Xenopus tropicalis (Western clawed frog).